The chain runs to 338 residues: MAPNVFGLATKATGLAKAKSLSSRAYVTFLAGNGDYWKGVVGLVKGLRKAKSAYPLVVACLPDVPEEHRRILINQGCIVREIEPVYPPHNQTQFAMAYYVINYSKLRIWEFVEYSKMIYLDGDIQVFDNIDHLFDLPDGYFYAVMDCFCEKTWSHTPQYKVGYCQQCPDKVQWTEDLGPKPSLYFNAGMFVYEPSLSTYDDLLKTLKVTPPTPFAEQDFLNMYFRDVYKPIPNDYNLVLAMLWRHPENVDLEKVKVVHYCAAGSKPWRYTGKEENMDREDIKMLIKKWWDIYDDESLDYKNSNVVMNAVDGEVEAQKIMEALSEAGVVHYITAPSAAS.

Residue Lys-105 is part of the active site. Residues Asp-121, Asp-123, and His-258 each coordinate Mn(2+).

This sequence belongs to the glycosyltransferase 8 family. Galactosyltransferase subfamily. A divalent metal cation is required as a cofactor.

It is found in the cytoplasm. The catalysed reaction is myo-inositol + UDP-alpha-D-galactose = alpha-D-galactosyl-(1-&gt;3)-1D-myo-inositol + UDP + H(+). Galactinol synthase involved in the biosynthesis of raffinose family oligosaccharides (RFOs) that function as osmoprotectants. May promote plant stress tolerance. In Solanum lycopersicum (Tomato), this protein is Galactinol synthase 2 (GOLS2).